The primary structure comprises 708 residues: Protein SUPPRESSOR OF MAX2 1A (708 aa).

Residues 248–283 (QMASKPQEKAASPPGSPVRTDLVLGPKQTETTPEKT) are disordered. Residues 537–541 (FDLNE) carry the EAR motif.

This sequence belongs to the ClpA/ClpB family.

Probable component of a transcriptional corepressor complex that acts downstream of MAX2 to negatively regulate karrikins/strigolactone responses. Involved in the (-)-germacrene D signaling pathway influencing plant fitness and occurring in the stigma in a KAI2IA-dependent manner. This is Protein SUPPRESSOR OF MAX2 1A from Petunia hybrida (Petunia).